A 567-amino-acid polypeptide reads, in one-letter code: Formate--tetrahydrofolate ligase (567 aa).

76 to 83 (TPAGEGKT) contributes to the ATP binding site.

This sequence belongs to the formate--tetrahydrofolate ligase family.

It carries out the reaction (6S)-5,6,7,8-tetrahydrofolate + formate + ATP = (6R)-10-formyltetrahydrofolate + ADP + phosphate. It participates in one-carbon metabolism; tetrahydrofolate interconversion. The sequence is that of Formate--tetrahydrofolate ligase from Sinorhizobium medicae (strain WSM419) (Ensifer medicae).